The chain runs to 626 residues: Chaperone protein HtpG (626 aa).

The segment at M1–R339 is a; substrate-binding. Positions E340 to K555 are b. Residues L556–G626 are c.

Belongs to the heat shock protein 90 family. In terms of assembly, homodimer.

Its subcellular location is the cytoplasm. Molecular chaperone. Has ATPase activity. The protein is Chaperone protein HtpG of Haemophilus influenzae (strain PittEE).